Reading from the N-terminus, the 512-residue chain is Oxalate--CoA ligase (512 aa).

An ATP-binding site is contributed by 168 to 179 (HTSGTTGRPKVV). Phosphoserine is present on residues Ser-283 and Ser-284. The FACS signature appears at 381-429 (DRFFRTGDEGKLDKDGYVFITGRIKELVNRGGEKISPAEIDAVLMQHPD). A Microbody targeting signal motif is present at residues 510–512 (AKL).

The protein belongs to the ATP-dependent AMP-binding enzyme family.

It is found in the peroxisome matrix. The protein resides in the peroxisome membrane. The enzyme catalyses oxalate + ATP + CoA = oxalyl-CoA + AMP + diphosphate. Functionally, catalyzes the first step in a degradation pathway of oxalate to CO(2) to protect the cell against the harmful effects of oxalate derived from endogenous processes or an environmental sources. The chain is Oxalate--CoA ligase (pcs60) from Schizosaccharomyces pombe (strain 972 / ATCC 24843) (Fission yeast).